A 327-amino-acid chain; its full sequence is Methionyl-tRNA formyltransferase (327 aa).

(6S)-5,6,7,8-tetrahydrofolate is bound at residue 117–120; it reads SLLP.

It belongs to the Fmt family.

The catalysed reaction is L-methionyl-tRNA(fMet) + (6R)-10-formyltetrahydrofolate = N-formyl-L-methionyl-tRNA(fMet) + (6S)-5,6,7,8-tetrahydrofolate + H(+). In terms of biological role, attaches a formyl group to the free amino group of methionyl-tRNA(fMet). The formyl group appears to play a dual role in the initiator identity of N-formylmethionyl-tRNA by promoting its recognition by IF2 and preventing the misappropriation of this tRNA by the elongation apparatus. The sequence is that of Methionyl-tRNA formyltransferase from Delftia acidovorans (strain DSM 14801 / SPH-1).